We begin with the raw amino-acid sequence, 270 residues long: Interleukin-1 alpha (270 aa).

A propeptide spanning residues 1–112 is cleaved from the precursor; sequence MAKVPDLFED…EVEEEIMKPR (112 aa). Lys82 bears the N6-acetyllysine mark. The interval 82–86 is nuclear localization signal (NLS); the sequence is KKRRL. At Ser87 the chain carries Phosphoserine. Asn139 is a glycosylation site (N-linked (GlcNAc...) asparagine).

The protein belongs to the IL-1 family. In terms of assembly, monomer. Interacts with TMED10; the interaction mediates the translocation from the cytoplasm into the ERGIC (endoplasmic reticulum-Golgi intermediate compartment) and thereby secretion. Interacts with IL1R1. Interacts with S100A13; this interaction is the first step in the export of IL1A, followed by direct translocation of this complex across the plasma membrane. Acetylated within its nuclear localization sequence, which impacts subcellular localization. In terms of processing, proteolytic processed by CAPN1 in a calcium-dependent manner. Cleavage from 31 kDa precursor to 18 kDa biologically active molecules. Post-translationally, phosphorylated. Phosphorylation greatly enhances susceptibility to digestion and promotes the conversion of pre-IL1A alpha to the biologically active IL1A.

The protein localises to the nucleus. It is found in the cytoplasm. It localises to the secreted. Functionally, cytokine constitutively present intracellularly in nearly all resting non-hematopoietic cells that plays an important role in inflammation and bridges the innate and adaptive immune systems. After binding to its receptor IL1R1 together with its accessory protein IL1RAP, forms the high affinity interleukin-1 receptor complex. Signaling involves the recruitment of adapter molecules such as MYD88, IRAK1 or IRAK4. In turn, mediates the activation of NF-kappa-B and the three MAPK pathways p38, p42/p44 and JNK pathways. Within the cell, acts as an alarmin and cell death results in its liberation in the extracellular space after disruption of the cell membrane to induce inflammation and alert the host to injury or damage. In addition to its role as a danger signal, which occurs when the cytokine is passively released by cell necrosis, directly senses DNA damage and acts as signal for genotoxic stress without loss of cell integrity. This chain is Interleukin-1 alpha (IL1A), found in Felis catus (Cat).